A 153-amino-acid chain; its full sequence is MSGKPQSPENQARQLIVAYQQYQAEAESLVRELGLIQMTAEGLDKAISAIGALSKAAEGQEMLVPIGSGSFAYAKLSSADRVVVNVGGGVSIEKPAEEAMEMLRARRSAISESSKKINEALAKIEQEMARIQAALERLERELQKQGGSEGFVQ.

The protein belongs to the prefoldin subunit alpha family. As to quaternary structure, heterohexamer of two alpha and four beta subunits.

Its subcellular location is the cytoplasm. Molecular chaperone capable of stabilizing a range of proteins. Seems to fulfill an ATP-independent, HSP70-like function in archaeal de novo protein folding. This chain is Prefoldin subunit alpha, found in Methanothrix thermoacetophila (strain DSM 6194 / JCM 14653 / NBRC 101360 / PT) (Methanosaeta thermophila).